A 481-amino-acid chain; its full sequence is 3-isopropylmalate dehydratase large subunit (481 aa).

Residues Cys357, Cys417, and Cys420 each coordinate [4Fe-4S] cluster. A compositionally biased stretch (polar residues) spans 429–441 (SPGQRCASTSNRN). The disordered stretch occupies residues 429-451 (SPGQRCASTSNRNFEGRQGKGGR).

The protein belongs to the aconitase/IPM isomerase family. LeuC type 1 subfamily. Heterodimer of LeuC and LeuD. The cofactor is [4Fe-4S] cluster.

It carries out the reaction (2R,3S)-3-isopropylmalate = (2S)-2-isopropylmalate. It functions in the pathway amino-acid biosynthesis; L-leucine biosynthesis; L-leucine from 3-methyl-2-oxobutanoate: step 2/4. In terms of biological role, catalyzes the isomerization between 2-isopropylmalate and 3-isopropylmalate, via the formation of 2-isopropylmaleate. In Mycobacterium sp. (strain KMS), this protein is 3-isopropylmalate dehydratase large subunit.